Reading from the N-terminus, the 290-residue chain is tRNA dimethylallyltransferase (290 aa).

11 to 18 (GPTASGKS) serves as a coordination point for ATP. A substrate-binding site is contributed by 13–18 (TASGKS). 2 interaction with substrate tRNA regions span residues 36 to 39 (DSMQ) and 158 to 162 (QRIVR).

It belongs to the IPP transferase family. In terms of assembly, monomer. It depends on Mg(2+) as a cofactor.

It catalyses the reaction adenosine(37) in tRNA + dimethylallyl diphosphate = N(6)-dimethylallyladenosine(37) in tRNA + diphosphate. In terms of biological role, catalyzes the transfer of a dimethylallyl group onto the adenine at position 37 in tRNAs that read codons beginning with uridine, leading to the formation of N6-(dimethylallyl)adenosine (i(6)A). The sequence is that of tRNA dimethylallyltransferase from Bartonella tribocorum (strain CIP 105476 / IBS 506).